The primary structure comprises 49 residues: U6-myrmicitoxin-Mri1a (49 aa).

An N-terminal signal peptide occupies residues 1–27 (MNPKALCSFLLATFLLLTVTIMPSVHA). Positions 28 to 35 (NAEANADA) are excised as a propeptide.

Post-translationally, contains 1 disulfide bond. Expressed by the venom gland.

Its subcellular location is the secreted. The chain is U6-myrmicitoxin-Mri1a from Manica rubida (European giant red ant).